The primary structure comprises 4493 residues: Mucin-17 (4493 aa).

The signal sequence occupies residues 1–25 (MPRPGTMALCLLTLVLSLLPPQAAA). Residues 26–4393 (EQDLSVNRAV…QGTQKSLVYG (4368 aa)) lie on the Extracellular side of the membrane. The segment covering 88–105 (NPEMTSIESSVTSDTPGV) has biased composition (polar residues). 4 disordered regions span residues 88-159 (NPEM…SISS), 188-223 (LTTS…SMPA), 248-277 (TISA…STPL), and 306-344 (VITS…ASTM). The span at 106–146 (SSTRMTPTESRTTSESTSDSTTLFPSSTEDTSSPTTPEGTD) shows a compositional bias: low complexity. The segment covering 148-159 (PMSTPSEESISS) has biased composition (polar residues). Tandem repeats lie at residues 185–245 (STPL…EIST), 246–300 (PVTI…TTPA), 301–361 (ATNI…PVDT), 362–418 (STLV…TIPV), 420–477 (SKTF…TTPV), 479–538 (SKTQ…PVDT), 539–597 (STPV…PADS), 598–654 (NTFV…TTPV), 656–715 (SNTP…PVDT), 716–774 (STPV…PLDT), 775–831 (STHI…TTPV), 833–892 (SNSP…PVDT), 893–951 (STPV…PVDT), 952–1010 (STPV…PVDS), 1011–1069 (NTPL…PADT), 1070–1121 (STPV…ASTL), 1122–1187 (STTP…PVDS), 1188–1246 (KTQV…PVDT), 1247–1305 (STPV…PVDT), 1306–1364 (KGPV…PVDN), 1365–1423 (STPV…PVDT), 1424–1482 (STPG…PVDS), 1483–1541 (NSPV…PAVT), 1542–1600 (STPV…PIDS), 1601–1656 (KTQV…TTPV), 1658–1717 (SNSP…PVDN), 1718–1776 (STPV…PIDT), 1777–1835 (STPV…PVDS), 1836–1895 (NSPV…AVTS), 1896–1951 (TPVT…TTLA), 1953–2012 (TRTP…PVDT), 2013–2071 (STPA…PVDS), 2072–2127 (KTQV…TTPV), 2129–2188 (SNSP…PVDT), 2189–2247 (STPV…PVDT), 2248–2306 (STPV…PVDS), 2307–2365 (NTPF…PADT), 2366–2424 (STPV…PVDT), 2425–2483 (STPV…PVDT), 2484–2540 (STPM…TTPV), 2542–2601 (SNSP…PVDT), 2602–2653 (SIPV…ASTL), 2654–2719 (STTP…PVDT), 2720–2770 (STPV…EAST), 2772–2837 (STTA…PVDT), 2838–2896 (STPV…PVDT), 2897–2955 (SIPV…PVDT), 2956–3014 (RTPV…PADT), 3015–3073 (STPV…PVDS), 3074–3132 (NSPV…PVDT), 3133–3191 (STPV…PVDT), 3192–3247 (STPV…TTPV), 3249–3308 (SNTP…PADT), 3309–3367 (STPV…PVDT), 3368–3426 (STPV…PVDS), 3427–3485 (NTLV…PVDT), and 3486–3544 (STPV…PVDS). The tract at residues 185–3727 (STPLTTSTQA…SVVTSTPVTT (3543 aa)) is 59 X approximate tandem repeats. A compositionally biased stretch (low complexity) spans 188–210 (LTTSTQASSSPTTPESTTIPKST). The span at 211 to 223 (NSEGSTPLTSMPA) shows a compositional bias: polar residues. Residues 308–323 (TSTEASSSPTTAEGTS) are compositionally biased toward low complexity. The span at 324-344 (IPTSTYTEGSTPLTSTPASTM) shows a compositional bias: polar residues. Residues 425–441 (TTASEASSSPTTAEDTS) show a composition bias toward low complexity. Disordered stretches follow at residues 425 to 629 (TTAS…ERGT), 644 to 868 (SEAS…TPLT), 886 to 1104 (STTP…TPLT), 1116 to 1163 (SEAS…TPLA), 1175 to 1279 (SEAN…GSTL), and 1296 to 1338 (STLL…GRTP). Positions 442–483 (IATSTPSEGSTPLTSMPVSTTPVASSEASNLSTTPVDSKTQV) are enriched in polar residues. N471 carries an N-linked (GlcNAc...) asparagine glycan. The segment covering 484–497 (TTSTEASSSPPTAE) has biased composition (low complexity). The span at 498 to 528 (VNSMPTSTPSEGSTPLTSMSVSTMPVASSEA) shows a compositional bias: polar residues. 2 stretches are compositionally biased toward low complexity: residues 529–573 (STLS…TPLT) and 584–618 (SSEA…EGTS). Polar residues-rich tracts occupy residues 619–629 (MPTSTYSERGT) and 644–660 (SEAS…NTPV). A compositionally biased stretch (low complexity) spans 661 to 677 (TTSTEATSSSTTAEGTS). A compositionally biased stretch (polar residues) spans 678–705 (MPTSTYTEGSTPLTSMPVNTTLVASSEA). N696 is a glycosylation site (N-linked (GlcNAc...) asparagine). Residues 706–733 (STLSTTPVDTSTPVTTSTEASSSPTTAD) are compositionally biased toward low complexity. The segment covering 737 to 754 (MPTSTPSEGSTPLTSMPV) has biased composition (polar residues). The segment covering 755-776 (SKTLLTSSEASTLSTTPLDTST) has biased composition (low complexity). Over residues 777–832 (HITTSTEASCSPTTTEGTSMPISTPSEGSPLLTSIPVSITPVTSPEASTLSTTPVD) the composition is skewed to polar residues. The span at 833–849 (SNSPVTTSTEVSSSPTP) shows a compositional bias: low complexity. Residues 854-868 (SMPTSTYSEGRTPLT) are compositionally biased toward polar residues. The segment covering 886–900 (STTPVDTSTPVTNST) has biased composition (low complexity). Residue N898 is glycosylated (N-linked (GlcNAc...) asparagine). Residues 901–944 (EARSSPTTSEGTSMPTSTPGEGSTPLTSMPDSTTPVVSSEARTL) are compositionally biased toward polar residues. Residues 945 to 972 (SATPVDTSTPVTTSTEATSSPTTAEGTS) show a composition bias toward low complexity. The span at 973 to 1011 (IPTSTPSEGTTPLTSTPVSHTLVANSEASTLSTTPVDSN) shows a compositional bias: polar residues. The span at 1012 to 1021 (TPLTTSTEAS) shows a compositional bias: low complexity. Over residues 1029–1062 (GTSMPTSTPSEGSTPLTRMPVSTTMVASSETSTL) the composition is skewed to polar residues. Positions 1063 to 1090 (STTPADTSTPVTTYSQASSSSTTADGTS) are enriched in low complexity. Composition is skewed to polar residues over residues 1091-1104 (MPTS…TPLT) and 1116-1132 (SEAS…SIPV). Low complexity predominate over residues 1133 to 1149 (TTSTEASSSPTTAEGTS). Polar residues-rich tracts occupy residues 1175–1198 (SEAN…TEAS) and 1205–1222 (EVTS…TPLT). The span at 1237–1279 (STLSTSPVDTSTPVTTSAETSSSPTTAEGTSLPTSTTSEGSTL) shows a compositional bias: low complexity. Polar residues-rich tracts occupy residues 1310–1320 (VTSNEVSSSPT) and 1326–1338 (SMPT…GRTP). The N-linked (GlcNAc...) asparagine glycan is linked to N1345. Polar residues predominate over residues 1360–1394 (TPVDNSTPVTTSTEACSSPTTSEGTSMPNSNPSEG). Disordered stretches follow at residues 1360 to 1516 (TPVD…STAL), 1537 to 1575 (TPAV…STPL), 1590 to 1930 (ANTL…PLTS), 1947 to 2163 (STTL…RTPL), 2177 to 2281 (AIST…TTPL), 2295 to 2501 (EVST…TTAE), 2524 to 2630 (TTPV…TPSE), 2647 to 2693 (SSEA…RSTP), 2709 to 2751 (ASTL…DGST), 2765 to 2853 (SSEA…SPTT), 2879 to 2925 (TPVA…TPSE), 2942 to 3167 (GSEA…TPLT), 3182 to 3577 (STLS…GSSS), 3589 to 3635 (TSSE…EVST), 3667 to 3701 (ITST…TMPV), 3785 to 3812 (MTTA…TSER), 3829 to 3849 (PSEA…LLTS), 3892 to 3914 (ASIA…DTAS), 3965 to 3988 (VITS…FSTT), and 4008 to 4129 (STAP…TPTV). Low complexity-rich tracts occupy residues 1395–1415 (TTPL…EAST) and 1423–1442 (TSTP…TAEG). A compositionally biased stretch (polar residues) spans 1461-1483 (PVSNTPVANSEASTLSTTPVDSN). Residues 1484-1499 (SPVVTSTAVSSSPTPA) show a composition bias toward low complexity. The segment covering 1504 to 1516 (IAISTPSEGSTAL) has biased composition (polar residues). Low complexity predominate over residues 1537-1547 (TPAVTSTPVTT). Composition is skewed to polar residues over residues 1548 to 1575 (YSQA…STPL) and 1590 to 1604 (ANTL…KTQV). A compositionally biased stretch (low complexity) spans 1605–1620 (TASTEASSSTTAEGSS). Polar residues-rich tracts occupy residues 1621–1673 (MTIS…SSPT) and 1679–1775 (SMPT…TPID). Low complexity predominate over residues 1776–1797 (TSTPVTTSTEATSSPTTAEGTS). The span at 1798–1836 (IPTSTLSEGMTPLTSTPVSHTLVANSEASTLSTTPVDSN) shows a compositional bias: polar residues. Residues 1837–1852 (SPVVTSTAVSSSPTPA) are compositionally biased toward low complexity. The segment covering 1856–1883 (SIATSTPSEGSTALTSIPVSTTTVASSE) has biased composition (polar residues). A compositionally biased stretch (low complexity) spans 1884–1900 (TNTLSTTPAVTSTPVTT). Composition is skewed to polar residues over residues 1901 to 1921 (YAQV…TSTP) and 1947 to 1976 (STTL…TSMP). Residues 1984–2033 (STPLTSMPLSTTLVVSSEASTLSTTPVDTSTPATTSTEGSSSPTTAGGTS) show a composition bias toward low complexity. Composition is skewed to polar residues over residues 2034–2043 (IQTSTPSERT) and 2051–2077 (VSTT…QVTN). N-linked (GlcNAc...) asparagine glycosylation occurs at N2077. Over residues 2078 to 2091 (STEASSSATAEGSS) the composition is skewed to low complexity. Residues 2092-2156 (MTISAPSEGS…EGTSMQTSTY (65 aa)) are compositionally biased toward polar residues. Residues 2177-2196 (AISTLSTTPVDTSTPVTNST) show a composition bias toward low complexity. Residue N2194 is glycosylated (N-linked (GlcNAc...) asparagine). Over residues 2197–2240 (EARSSPTTSEGTSMPTSTPSEGSTPFTSMPVSTMPVVTSEASTL) the composition is skewed to polar residues. A compositionally biased stretch (low complexity) spans 2241-2268 (SATPVDTSTPVTTSTEATSSPTTAEGTS). Polar residues-rich tracts occupy residues 2269-2281 (IPTS…TTPL) and 2295-2307 (EVST…VDSN). Residues 2308–2317 (TPFTTSTEAS) are compositionally biased toward low complexity. A compositionally biased stretch (polar residues) spans 2325-2358 (GTSMPTSTSSEGNTPLTRMPVSTTMVASFETSTL). The segment covering 2359–2371 (STTPADTSTPVTT) has biased composition (low complexity). Positions 2372–2395 (YSQAGSSPTTADDTSMPTSTYSEG) are enriched in polar residues. Low complexity-rich tracts occupy residues 2396–2445 (STPL…EGTS) and 2462–2499 (PVST…SPTT). The segment covering 2524–2547 (TTPVASPEASTLSTTPVDSNSPVV) has biased composition (polar residues). The span at 2548 to 2563 (TSTEISSSATSAEGTS) shows a compositional bias: low complexity. The segment covering 2564 to 2576 (MPTSTYSEGSTPL) has biased composition (polar residues). Low complexity predominate over residues 2586–2617 (LASSEASTLSTTPVDTSIPVTTSTETSSSPTT). The segment covering 2618–2628 (AKDTSMPISTP) has biased composition (polar residues). The span at 2654–2681 (STTPVDTRTLVTTSTGTSSSPTTAEGSS) shows a compositional bias: low complexity. A compositionally biased stretch (polar residues) spans 2682 to 2693 (MPTSTPGERSTP). Over residues 2710-2740 (STLSTTPVDTSTPVTTSAEASSSPTTAEGTS) the composition is skewed to low complexity. The span at 2741–2751 (MRISTPSDGST) shows a compositional bias: polar residues. Composition is skewed to low complexity over residues 2765 to 2816 (SSEA…TSMP) and 2829 to 2853 (TLST…SPTT). The span at 2879-2900 (TPVASSEASTLSTTPVDTSIPV) shows a compositional bias: polar residues. Low complexity-rich tracts occupy residues 2901–2917 (TTST…EGTS) and 2950–2976 (TTPV…EGTS). Polar residues predominate over residues 2988 to 3009 (PLTSMSVSTMPVASSEASTLSR). Residues 3010-3031 (TPADTSTPVTTSTEASSSPTTA) show a composition bias toward low complexity. Polar residues predominate over residues 3037–3057 (PISTPSEGSTPLTSIPVSTTP). 2 stretches are compositionally biased toward low complexity: residues 3073–3089 (SNSP…SPTP) and 3104–3140 (STPL…TTST). A compositionally biased stretch (polar residues) spans 3141-3166 (EAHSSPTTSEGTSMPTSTPSEGSTPL). Residues 3185–3211 (SATPVDTSTPVTTSTEATSSTTAEGTS) are compositionally biased toward low complexity. A compositionally biased stretch (polar residues) spans 3212–3253 (IPTSTPSEGMTPLTSVPVSNTPVASSEASILSTTPVDSNTPL). Low complexity predominate over residues 3254-3267 (TTSTEASSSPPTAE). Residues 3268-3288 (GTSMPTSTPSEGSTPLTSMPV) are compositionally biased toward polar residues. Residues 3289-3314 (STTTVASSETSTLSTTPADTSTPVTT) show a composition bias toward low complexity. A compositionally biased stretch (polar residues) spans 3329 to 3357 (SMPTSTYSEGSTPLTNMSFSTTPVVSSEA). The N-linked (GlcNAc...) asparagine glycan is linked to N3344. Residues 3358–3375 (STLSTTPVDTSTPVTTST) are compositionally biased toward low complexity. A compositionally biased stretch (polar residues) spans 3376–3401 (EASLSPTTAEGTSIPTSSPSEGTTPL). The segment covering 3405-3414 (PVSTTPVVSS) has biased composition (low complexity). Composition is skewed to polar residues over residues 3415–3441 (EVNT…SSPT) and 3447–3475 (SLPT…SSEA). Residues 3476 to 3501 (STLSTTPVDTSTPVTTSSPTNSSPTT) are compositionally biased toward low complexity. 2 stretches are compositionally biased toward polar residues: residues 3502–3549 (AEVT…TFVT) and 3558–3571 (PATL…MSTP). Residues 3589–3616 (TSSEASTPSTPSVDRSTPVTTSTQSNST) show a composition bias toward low complexity. 2 repeat units span residues 3604-3662 (STPV…PVDT) and 3663-3727 (STPV…PVTT). Polar residues predominate over residues 3626 to 3635 (PMSTPSEVST). The span at 3667 to 3679 (ITSTQVSSSPVTP) shows a compositional bias: low complexity. 2 stretches are compositionally biased toward polar residues: residues 3690–3701 (SEGSTPLTTMPV) and 3785–3806 (MTTA…TMPM). Low complexity-rich tracts occupy residues 3967–3988 (TSTE…FSTT), 4008–4083 (STAP…SSTT), and 4090–4129 (TTMT…TPTV). N-linked (GlcNAc...) asparagine glycosylation occurs at N4116. Residues 4131–4170 (RTTTCFGDGCQNTASRCKNGGTWDGLKCQCPNLYYGELCE) enclose the EGF-like domain. 3 disulfides stabilise this stretch: C4135-C4147, C4140-C4158, and C4160-C4169. An SEA domain is found at 4184–4291 (ISAQMELTVT…QQIMINDICS (108 aa)). N4205, N4236, N4267, N4297, and N4305 each carry an N-linked (GlcNAc...) asparagine glycan. A helical transmembrane segment spans residues 4394 to 4414 (LVGAGVVLMLIILVALLMLVF). The Cytoplasmic portion of the chain corresponds to 4415 to 4493 (RSKREVKRQK…QRPQVMTTSF (79 aa)).

As to quaternary structure, interacts via its C-terminus with PDZK1 and this interaction appears important for proper localization. Probably cleaved within the SEA domain. Post-translationally, N-glycosylated. Contains high mannose and complex-type glycans. The forms containing the complex type glycans localize to the cell surface. Not O-glycosylated. As to expression, expressed almost exclusively in the intestine. Expression is especially high in both the duodenum and transverse colon. Expressed in mature absorptive cells of the small intestinal villi. No expression is detected in goblet cells. Highly expressed in pancreatic adenocarcinoma tissue (at protein level). Expression is not detectable in normal pancreas, in pancreatitis or in cell lines derived from other cancers.

The protein resides in the cell membrane. The protein localises to the secreted. In terms of biological role, probably plays a role in maintaining homeostasis on mucosal surfaces. The sequence is that of Mucin-17 (MUC17) from Homo sapiens (Human).